Consider the following 1857-residue polypeptide: Fer-1-like protein 6 (1857 aa).

The Cytoplasmic portion of the chain corresponds to 1-1824; sequence MFGLKVKKKR…YLIWKNYKKY (1824 aa). Positions 15 to 63 are disordered; sequence KGLILANKAAKDSQGDTEALQEEPSHQEGPRGDLVHDDASIFPVPSASP. The segment covering 37–53 has biased composition (basic and acidic residues); it reads EPSHQEGPRGDLVHDDA. C2 domains are found at residues 65-181 and 225-356; these read RRSK…QFCN and PIEK…DKGF. The segment covering 426–447 has biased composition (basic and acidic residues); it reads SKDKDSKSSKGKDKADKTEDGK. The disordered stretch occupies residues 426 to 469; it reads SKDKDSKSSKGKDKADKTEDGKSQQASNKTNSTEVEVESFDVPP. A compositionally biased stretch (polar residues) spans 448–459; it reads SQQASNKTNSTE. 2 C2 domains span residues 810-937 and 969-1099; these read GTNH…RLCY and PVEP…LAPI. Ca(2+) is bound by residues D842, D848, D904, and D906. Disordered regions lie at residues 1101 to 1148, 1161 to 1203, and 1224 to 1246; these read QVDG…VVPD, PDSS…RTIA, and AQKA…PDEV. Residues 1113-1129 are compositionally biased toward polar residues; the sequence is DSLTATESSGAHSSSQD. The segment covering 1178–1189 has biased composition (basic and acidic residues); that stretch reads PPKDGKPKDPRK. Residues 1190-1200 are compositionally biased toward basic residues; the sequence is PSRRSTKRRKR. Over residues 1226–1245 the composition is skewed to basic and acidic residues; it reads KAKERNPKGKKGNTEAKPDE. C2 domains are found at residues 1338 to 1457 and 1578 to 1729; these read DSGQ…AICG and DMPQ…KACD. 5 residues coordinate Ca(2+): D1372, D1378, D1427, D1429, and D1435. The helical transmembrane segment at 1825 to 1845 threads the bilayer; the sequence is IIIAFILIILIIFLVLFIYTL. The Extracellular segment spans residues 1846-1857; it reads PGAISRRIVVGS.

The protein belongs to the ferlin family. The cofactor is Ca(2+).

It localises to the membrane. This is Fer-1-like protein 6 (FER1L6) from Homo sapiens (Human).